A 254-amino-acid chain; its full sequence is Proteasome subunit alpha type-4 (254 aa).

At T60 the chain carries Phosphothreonine. A disordered region spans residues 235-254; the sequence is QIEQEKQEQQEQDKKKKSNH. The span at 237-248 shows a compositional bias: basic and acidic residues; the sequence is EQEKQEQQEQDK.

This sequence belongs to the peptidase T1A family. As to quaternary structure, the 26S proteasome consists of a 20S proteasome core and two 19S regulatory subunits. The 20S proteasome core is composed of 28 subunits that are arranged in four stacked rings, resulting in a barrel-shaped structure. The two end rings are each formed by seven alpha subunits, and the two central rings are each formed by seven beta subunits. The catalytic chamber with the active sites is on the inside of the barrel. Interacts with CIC1.

It is found in the cytoplasm. The protein localises to the nucleus. In terms of biological role, the proteasome degrades poly-ubiquitinated proteins in the cytoplasm and in the nucleus. It is essential for the regulated turnover of proteins and for the removal of misfolded proteins. The proteasome is a multicatalytic proteinase complex that is characterized by its ability to cleave peptides with Arg, Phe, Tyr, Leu, and Glu adjacent to the leaving group at neutral or slightly basic pH. It has an ATP-dependent proteolytic activity. The chain is Proteasome subunit alpha type-4 (PRE6) from Saccharomyces cerevisiae (strain ATCC 204508 / S288c) (Baker's yeast).